A 396-amino-acid chain; its full sequence is NADH-quinone oxidoreductase subunit D (396 aa).

It belongs to the complex I 49 kDa subunit family. As to quaternary structure, NDH-1 is composed of 14 different subunits. Subunits NuoB, C, D, E, F, and G constitute the peripheral sector of the complex.

The protein resides in the cell inner membrane. It catalyses the reaction a quinone + NADH + 5 H(+)(in) = a quinol + NAD(+) + 4 H(+)(out). NDH-1 shuttles electrons from NADH, via FMN and iron-sulfur (Fe-S) centers, to quinones in the respiratory chain. The immediate electron acceptor for the enzyme in this species is believed to be ubiquinone. Couples the redox reaction to proton translocation (for every two electrons transferred, four hydrogen ions are translocated across the cytoplasmic membrane), and thus conserves the redox energy in a proton gradient. This chain is NADH-quinone oxidoreductase subunit D, found in Bartonella bacilliformis (strain ATCC 35685 / KC583 / Herrer 020/F12,63).